The sequence spans 373 residues: Queuine tRNA-ribosyltransferase (373 aa).

The Proton acceptor role is filled by Asp90. Residues 90-94 (DSGGF), Asp144, Gln193, and Gly220 contribute to the substrate site. The tract at residues 251-257 (GVGTPED) is RNA binding. The active-site Nucleophile is the Asp270. The tract at residues 275–279 (TRNAR) is RNA binding; important for wobble base 34 recognition. Residues Cys308, Cys310, Cys313, and His339 each contribute to the Zn(2+) site.

This sequence belongs to the queuine tRNA-ribosyltransferase family. As to quaternary structure, homodimer. Within each dimer, one monomer is responsible for RNA recognition and catalysis, while the other monomer binds to the replacement base PreQ1. It depends on Zn(2+) as a cofactor.

The enzyme catalyses 7-aminomethyl-7-carbaguanine + guanosine(34) in tRNA = 7-aminomethyl-7-carbaguanosine(34) in tRNA + guanine. Its pathway is tRNA modification; tRNA-queuosine biosynthesis. Catalyzes the base-exchange of a guanine (G) residue with the queuine precursor 7-aminomethyl-7-deazaguanine (PreQ1) at position 34 (anticodon wobble position) in tRNAs with GU(N) anticodons (tRNA-Asp, -Asn, -His and -Tyr). Catalysis occurs through a double-displacement mechanism. The nucleophile active site attacks the C1' of nucleotide 34 to detach the guanine base from the RNA, forming a covalent enzyme-RNA intermediate. The proton acceptor active site deprotonates the incoming PreQ1, allowing a nucleophilic attack on the C1' of the ribose to form the product. After dissociation, two additional enzymatic reactions on the tRNA convert PreQ1 to queuine (Q), resulting in the hypermodified nucleoside queuosine (7-(((4,5-cis-dihydroxy-2-cyclopenten-1-yl)amino)methyl)-7-deazaguanosine). The chain is Queuine tRNA-ribosyltransferase from Campylobacter jejuni subsp. jejuni serotype O:23/36 (strain 81-176).